A 128-amino-acid polypeptide reads, in one-letter code: Transcription antitermination protein NusB (128 aa).

Belongs to the NusB family.

Functionally, involved in transcription antitermination. Required for transcription of ribosomal RNA (rRNA) genes. Binds specifically to the boxA antiterminator sequence of the ribosomal RNA (rrn) operons. The chain is Transcription antitermination protein NusB from Listeria welshimeri serovar 6b (strain ATCC 35897 / DSM 20650 / CCUG 15529 / CIP 8149 / NCTC 11857 / SLCC 5334 / V8).